The sequence spans 496 residues: N-succinylglutamate 5-semialdehyde dehydrogenase (496 aa).

229-234 serves as a coordination point for NAD(+); the sequence is GSYATG. Catalysis depends on residues E252 and C286.

The protein belongs to the aldehyde dehydrogenase family. AstD subfamily.

It carries out the reaction N-succinyl-L-glutamate 5-semialdehyde + NAD(+) + H2O = N-succinyl-L-glutamate + NADH + 2 H(+). The protein operates within amino-acid degradation; L-arginine degradation via AST pathway; L-glutamate and succinate from L-arginine: step 4/5. In terms of biological role, catalyzes the NAD-dependent reduction of succinylglutamate semialdehyde into succinylglutamate. The chain is N-succinylglutamate 5-semialdehyde dehydrogenase from Legionella pneumophila subsp. pneumophila (strain Philadelphia 1 / ATCC 33152 / DSM 7513).